Consider the following 44-residue polypeptide: Photosystem I reaction center subunit IX (44 aa).

The helical transmembrane segment at Tyr7 to Ile27 threads the bilayer.

This sequence belongs to the PsaJ family.

The protein localises to the plastid. Its subcellular location is the chloroplast thylakoid membrane. Functionally, may help in the organization of the PsaE and PsaF subunits. This chain is Photosystem I reaction center subunit IX, found in Pinus thunbergii (Japanese black pine).